The chain runs to 135 residues: Photosystem II extrinsic protein U (135 aa).

The first 29 residues, 1 to 29 (MKRLLSWLTGALLMAGLLAGLILPGSVHA), serve as a signal peptide directing secretion.

The protein belongs to the PsbU family. In terms of assembly, PSII is composed of 1 copy each of membrane proteins PsbA, PsbB, PsbC, PsbD, PsbE, PsbF, PsbH, PsbI, PsbJ, PsbK, PsbL, PsbM, PsbT, PsbX, PsbY, Psb30/Ycf12, peripheral proteins PsbO, CyanoQ (PsbQ), PsbU, PsbV and a large number of cofactors. It forms dimeric complexes.

It is found in the cellular thylakoid membrane. One of the extrinsic, lumenal subunits of photosystem II (PSII). PSII is a light-driven water plastoquinone oxidoreductase, using light energy to abstract electrons from H(2)O, generating a proton gradient subsequently used for ATP formation. The extrinsic proteins stabilize the structure of photosystem II oxygen-evolving complex (OEC), the ion environment of oxygen evolution and protect the OEC against heat-induced inactivation. This chain is Photosystem II extrinsic protein U, found in Parasynechococcus marenigrum (strain WH8102).